We begin with the raw amino-acid sequence, 613 residues long: RNA polymerase-associated protein RTF1 homolog (613 aa).

Disordered stretches follow at residues 1 to 90 and 121 to 247; these read MSSS…DKAR and QQLA…KDKI. The segment covering 55–68 has biased composition (basic residues); that stretch reads PAKKKTLTKRKRRA. The segment covering 72 to 81 has biased composition (acidic residues); it reads SDDDQVDDDL. Residues 167–176 show a composition bias toward basic and acidic residues; sequence AAFHRPSDIN. Positions 175-209 form a coiled coil; sequence INRKHKEKNAMDALKNKRKEIEKKNAKNEALSIDA. Residues 215–235 are compositionally biased toward low complexity; the sequence is SGSSSSSSSSESSRSSSSSRE. Basic and acidic residues predominate over residues 236 to 247; sequence SSPERVSEKDKI. Residues 252–383 enclose the Plus3 domain; it reads VDGLSELRRA…KKQDIEKAIN (132 aa). Residues 425-462 adopt a coiled-coil conformation; sequence RGDIREAEQIQTKIDEIERQADELEKERSKSISAIAFI. Disordered regions lie at residues 485–549 and 564–613; these read SQDD…KTDI and LKDF…SSAV. The segment covering 510 to 521 has biased composition (low complexity); the sequence is TLSASSSTTNLS. A compositionally biased stretch (polar residues) spans 569–586; the sequence is TPESSGNKRPSISSSKGV. Residues 602–613 show a composition bias toward low complexity; it reads GSSTSAAPSSAV.

As to quaternary structure, component of the PAF1 complex which consists of at least cdc-73, ctr-9, leo-1, pafo-1 and rtfo-1.

It localises to the nucleus. Functionally, component of the PAF1 complex which is a multifunctional complex involved in transcription initiation via genetic interactions with TATA-binding proteins, elongation and transcription-coupled histone modification. In Caenorhabditis elegans, this protein is RNA polymerase-associated protein RTF1 homolog.